A 181-amino-acid polypeptide reads, in one-letter code: Adenine phosphoribosyltransferase (181 aa).

It belongs to the purine/pyrimidine phosphoribosyltransferase family. Homodimer.

The protein localises to the cytoplasm. The enzyme catalyses AMP + diphosphate = 5-phospho-alpha-D-ribose 1-diphosphate + adenine. The protein operates within purine metabolism; AMP biosynthesis via salvage pathway; AMP from adenine: step 1/1. Its function is as follows. Catalyzes a salvage reaction resulting in the formation of AMP, that is energically less costly than de novo synthesis. This Acidobacterium capsulatum (strain ATCC 51196 / DSM 11244 / BCRC 80197 / JCM 7670 / NBRC 15755 / NCIMB 13165 / 161) protein is Adenine phosphoribosyltransferase.